The chain runs to 289 residues: Ribosomal RNA small subunit methyltransferase A (289 aa).

6 residues coordinate S-adenosyl-L-methionine: His-27, Leu-29, Gly-54, Glu-76, Asp-102, and Asn-123.

The protein belongs to the class I-like SAM-binding methyltransferase superfamily. rRNA adenine N(6)-methyltransferase family. RsmA subfamily.

The protein resides in the cytoplasm. It carries out the reaction adenosine(1518)/adenosine(1519) in 16S rRNA + 4 S-adenosyl-L-methionine = N(6)-dimethyladenosine(1518)/N(6)-dimethyladenosine(1519) in 16S rRNA + 4 S-adenosyl-L-homocysteine + 4 H(+). Specifically dimethylates two adjacent adenosines (A1518 and A1519) in the loop of a conserved hairpin near the 3'-end of 16S rRNA in the 30S particle. May play a critical role in biogenesis of 30S subunits. This is Ribosomal RNA small subunit methyltransferase A from Maricaulis maris (strain MCS10) (Caulobacter maris).